A 391-amino-acid chain; its full sequence is Chorismate synthase (391 aa).

NADP(+)-binding residues include Arg39 and Arg45. Residues 133-135, 254-255, Gly299, 314-318, and Arg340 each bind FMN; these read RAS, QA, and KPIAT.

The protein belongs to the chorismate synthase family. In terms of assembly, homotetramer. FMNH2 serves as cofactor.

It catalyses the reaction 5-O-(1-carboxyvinyl)-3-phosphoshikimate = chorismate + phosphate. The protein operates within metabolic intermediate biosynthesis; chorismate biosynthesis; chorismate from D-erythrose 4-phosphate and phosphoenolpyruvate: step 7/7. In terms of biological role, catalyzes the anti-1,4-elimination of the C-3 phosphate and the C-6 proR hydrogen from 5-enolpyruvylshikimate-3-phosphate (EPSP) to yield chorismate, which is the branch point compound that serves as the starting substrate for the three terminal pathways of aromatic amino acid biosynthesis. This reaction introduces a second double bond into the aromatic ring system. The sequence is that of Chorismate synthase from Symbiobacterium thermophilum (strain DSM 24528 / JCM 14929 / IAM 14863 / T).